A 434-amino-acid chain; its full sequence is Anaerobic glycerol-3-phosphate dehydrogenase subunit B (434 aa).

It belongs to the anaerobic G-3-P dehydrogenase subunit B family. In terms of assembly, composed of a catalytic GlpA/B dimer and of membrane bound GlpC. Requires FMN as cofactor.

The enzyme catalyses a quinone + sn-glycerol 3-phosphate = dihydroxyacetone phosphate + a quinol. It participates in polyol metabolism; glycerol degradation via glycerol kinase pathway; glycerone phosphate from sn-glycerol 3-phosphate (anaerobic route): step 1/1. Conversion of glycerol 3-phosphate to dihydroxyacetone. Uses fumarate or nitrate as electron acceptor. This Histophilus somni (strain 2336) (Haemophilus somnus) protein is Anaerobic glycerol-3-phosphate dehydrogenase subunit B.